A 258-amino-acid polypeptide reads, in one-letter code: Bidirectional sugar transporter SWEET9 (258 aa).

The Extracellular segment spans residues 1–7 (MFLKVHE). Residues 8–28 (IAFLFGLLGNIVSFGVFLSPV) traverse the membrane as a helical segment. Residues 10–96 (FLFGLLGNIV…FLYILYAPRE (87 aa)) form the MtN3/slv 1 domain. Residues 29-42 (PTFYGIYKKKSSKG) are Cytoplasmic-facing. Residues 43–63 (FQSIPYICALASATLLLYYGI) form a helical membrane-spanning segment. The Extracellular portion of the chain corresponds to 64–69 (MKTHAY). Residues 70 to 90 (LIISINTFGCFIEISYLFLYI) traverse the membrane as a helical segment. Over 91-103 (LYAPREAKISTLK) the chain is Cytoplasmic. Residues 104–124 (LIVICNIGGLGLLILLVNLLV) form a helical membrane-spanning segment. Residues 125 to 131 (PKQHRVS) are Extracellular-facing. A helical membrane pass occupies residues 132-152 (TVGWVCAAYSLAVFASPLSVM). Residues 132–216 (TVGWVCAAYS…ILYMMYQGST (85 aa)) form the MtN3/slv 2 domain. The Cytoplasmic segment spans residues 153–165 (RKVIKTKSVEYMP). Residues 166–186 (FLLSLSLTLNAVMWFFYGLLI) traverse the membrane as a helical segment. Over 187–189 (KDK) the chain is Extracellular. The helical transmembrane segment at 190 to 210 (FIAMPNILGFLFGVAQMILYM) threads the bilayer. At 211-258 (MYQGSTKTDLPTENQLANKTDVNEVPIVAVELPDVGSDNVEGSVRPMK) the chain is on the cytoplasmic side.

Belongs to the SWEET sugar transporter family. As to quaternary structure, forms heterooligomers with SWEET1, SWEET5, SWEET8, SWEET11, SWEET13, SWEET16 and SWEET17. As to expression, specifically expressed in nectaries, mostly in the lower half of nectary parenchyma.

Its subcellular location is the cell membrane. The protein resides in the cytoplasmic vesicle membrane. It is found in the golgi apparatus. It localises to the trans-Golgi network membrane. Functionally, mediates both low-affinity uptake and efflux of sugar across the plasma membrane. Nectary-specific sugar transporter required for nectar production by mediating the secretion of sucrose from the nectary parenchyma to the extracellular space. In Arabidopsis thaliana (Mouse-ear cress), this protein is Bidirectional sugar transporter SWEET9.